Here is a 74-residue protein sequence, read N- to C-terminus: Turripeptide OL135 (74 aa).

Positions 1-20 are cleaved as a signal peptide; that stretch reads MKVPIVLMLVLLLIMPLSDG. A propeptide spanning residues 21-28 is cleaved from the precursor; the sequence is YERKRXXX.

The protein belongs to the conopeptide P-like superfamily. In terms of processing, contains 3 disulfide bonds. Expressed by the venom duct.

The protein resides in the secreted. Its function is as follows. Acts as a neurotoxin by inhibiting an ion channel. This is Turripeptide OL135 from Iotyrris olangoensis (Sea snail).